A 338-amino-acid chain; its full sequence is MTDLTTPIRTPEDADAALRPKTLAEFVGQAAARENLRIFIEAAKARGDALDHVLFFGPPGLGKTTLAQIVARELGVGFRSTSGPVIAKAGDLAALLTNLEDGDVLFIDEIHRLSPAVEEILYPAMEDRALDIMIGEGPSARSVRIDLPQFTLVGATTRQGLLTTPLRDRFGIPVRLNFYTHAELEQVIGRAARLLGLAIAPDGALEIAKRSRGTPRIAGRLLRRVRDFAAVAGHAIVDARAADAALNRLEVDALGLDAMDRRYLTMIADIYRGGPVGVETLAAGLSEPRDTIEDVIEPYLLQIGLIARTARGRTLNASAWKHLGLNPPAGSQDGLFDK.

Residues 1–179 (MTDLTTPIRT…FGIPVRLNFY (179 aa)) are large ATPase domain (RuvB-L). ATP-binding residues include L18, R19, G60, K63, T64, T65, R169, Y179, and R216. T64 contributes to the Mg(2+) binding site. Positions 180 to 250 (THAELEQVIG…AADAALNRLE (71 aa)) are small ATPAse domain (RuvB-S). The interval 253-338 (ALGLDAMDRR…AGSQDGLFDK (86 aa)) is head domain (RuvB-H). R289, R308, and R313 together coordinate DNA.

This sequence belongs to the RuvB family. In terms of assembly, homohexamer. Forms an RuvA(8)-RuvB(12)-Holliday junction (HJ) complex. HJ DNA is sandwiched between 2 RuvA tetramers; dsDNA enters through RuvA and exits via RuvB. An RuvB hexamer assembles on each DNA strand where it exits the tetramer. Each RuvB hexamer is contacted by two RuvA subunits (via domain III) on 2 adjacent RuvB subunits; this complex drives branch migration. In the full resolvosome a probable DNA-RuvA(4)-RuvB(12)-RuvC(2) complex forms which resolves the HJ.

The protein resides in the cytoplasm. The enzyme catalyses ATP + H2O = ADP + phosphate + H(+). In terms of biological role, the RuvA-RuvB-RuvC complex processes Holliday junction (HJ) DNA during genetic recombination and DNA repair, while the RuvA-RuvB complex plays an important role in the rescue of blocked DNA replication forks via replication fork reversal (RFR). RuvA specifically binds to HJ cruciform DNA, conferring on it an open structure. The RuvB hexamer acts as an ATP-dependent pump, pulling dsDNA into and through the RuvAB complex. RuvB forms 2 homohexamers on either side of HJ DNA bound by 1 or 2 RuvA tetramers; 4 subunits per hexamer contact DNA at a time. Coordinated motions by a converter formed by DNA-disengaged RuvB subunits stimulates ATP hydrolysis and nucleotide exchange. Immobilization of the converter enables RuvB to convert the ATP-contained energy into a lever motion, pulling 2 nucleotides of DNA out of the RuvA tetramer per ATP hydrolyzed, thus driving DNA branch migration. The RuvB motors rotate together with the DNA substrate, which together with the progressing nucleotide cycle form the mechanistic basis for DNA recombination by continuous HJ branch migration. Branch migration allows RuvC to scan DNA until it finds its consensus sequence, where it cleaves and resolves cruciform DNA. The sequence is that of Holliday junction branch migration complex subunit RuvB from Sphingopyxis alaskensis (strain DSM 13593 / LMG 18877 / RB2256) (Sphingomonas alaskensis).